The chain runs to 446 residues: Exodeoxyribonuclease 7 large subunit (446 aa).

The protein belongs to the XseA family. As to quaternary structure, heterooligomer composed of large and small subunits.

Its subcellular location is the cytoplasm. It carries out the reaction Exonucleolytic cleavage in either 5'- to 3'- or 3'- to 5'-direction to yield nucleoside 5'-phosphates.. Functionally, bidirectionally degrades single-stranded DNA into large acid-insoluble oligonucleotides, which are then degraded further into small acid-soluble oligonucleotides. This Ligilactobacillus salivarius (strain UCC118) (Lactobacillus salivarius) protein is Exodeoxyribonuclease 7 large subunit.